The primary structure comprises 122 residues: Lycotoxin-Pa4a (122 aa).

The first 20 residues, 1 to 20 (MKLGIFFSVFFLAMIHSCLS), serve as a signal peptide directing secretion. The propeptide occupies 21-47 (ETNEDKNLESYFREDDLKALSFGEYAR). Disulfide bonds link cysteine 58/cysteine 73, cysteine 65/cysteine 82, cysteine 72/cysteine 100, and cysteine 84/cysteine 98.

Belongs to the neurotoxin 19 (CSTX) family. As to expression, expressed by the venom gland.

It is found in the secreted. The protein resides in the target cell membrane. Potent antibacterial peptide with anti-inflammatory properties. Inhibits both Gram-negative and Gram-positive bacteria by disrupting both the outer membrane and the cytosolic membrane of bacteria. Also downregulates the expression of pro-inflammatory mediators (cyclooxygenase-2 (PTGS2/COX2), nitric oxide-induced synthase (NOS2), IL-1 beta (IL1B), TNF-alpha (TNF)) and upregulates the level of anti-inflammatory cytokine (IL10) by inactivating mitogen-activated protein kinase signaling in a lipopolysaccharide-stimulated murine macrophage cell line. The chain is Lycotoxin-Pa4a from Pardosa astrigera (Wolf spider).